A 1076-amino-acid chain; its full sequence is Atos homolog protein A (1076 aa).

Residues 24–32 are transactivation domain 1 (TAD1); it reads ALLITEGRT. Disordered stretches follow at residues 700-721 and 739-765; these read ESMS…TQLN and SDQL…QRRS. Basic and acidic residues predominate over residues 739 to 754; the sequence is SDQLKNEQDKQEDPTN. Residues 878-935 form a required for macropage invasion region; sequence LLGNFEESVLNYRFDPLGIVDGFTAEVGASGAFCPTHLTLPVEVSFYSVSDDNAPSPY. The segment at 962–970 is transactivation domain 2 (TAD2); that stretch reads FNPNKTVVK.

The protein belongs to the ATOS family.

The protein localises to the nucleus. Functionally, transcription regulator that syncronizes transcriptional and translational programs to promote macrophage invasion of tissues. The protein is Atos homolog protein A of Homo sapiens (Human).